The sequence spans 329 residues: ATP-dependent (S)-NAD(P)H-hydrate dehydratase (329 aa).

The transit peptide at 1-28 directs the protein to the mitochondrion; that stretch reads MALGPGCRAVRGCRPVLKRAFSLHKAHS. One can recognise a YjeF C-terminal domain in the interval 35–326; the sequence is ILQLVRSVVP…AEVGPAFRRL (292 aa). K49 carries the post-translational modification N6-acetyllysine. Y67 is modified (phosphotyrosine). Residues G135 and 188–194 contribute to the (6S)-NADPHX site; that span reads NHVEFGR. ATP is bound by residues 228–232 and 247–256; these read KGEQD and GSGRRCGGQG. D257 is a (6S)-NADPHX binding site.

The protein belongs to the NnrD/CARKD family. Mg(2+) is required as a cofactor.

The protein resides in the mitochondrion. It carries out the reaction (6S)-NADHX + ATP = ADP + phosphate + NADH + H(+). It catalyses the reaction (6S)-NADPHX + ATP = ADP + phosphate + NADPH + H(+). Catalyzes the dehydration of the S-form of NAD(P)HX at the expense of ATP, which is converted to ADP. Together with NAD(P)HX epimerase, which catalyzes the epimerization of the S- and R-forms, the enzyme allows the repair of both epimers of NAD(P)HX, a damaged form of NAD(P)H that is a result of enzymatic or heat-dependent hydration. The polypeptide is ATP-dependent (S)-NAD(P)H-hydrate dehydratase (Bos taurus (Bovine)).